The chain runs to 37 residues: Large ribosomal subunit protein bL36A (37 aa).

Belongs to the bacterial ribosomal protein bL36 family.

The sequence is that of Large ribosomal subunit protein bL36A from Haemophilus ducreyi (strain 35000HP / ATCC 700724).